Here is a 657-residue protein sequence, read N- to C-terminus: Threonine--tRNA ligase (657 aa).

The TGS domain occupies 7-70 (SQTQVTVTLP…SEDASIEIVT (64 aa)). The catalytic stretch occupies residues 253–555 (DHRKLGAELE…LIEHTGGNFP (303 aa)). Positions 351, 402, and 532 each coordinate Zn(2+).

This sequence belongs to the class-II aminoacyl-tRNA synthetase family. Homodimer. Zn(2+) is required as a cofactor.

The protein localises to the cytoplasm. The catalysed reaction is tRNA(Thr) + L-threonine + ATP = L-threonyl-tRNA(Thr) + AMP + diphosphate + H(+). In terms of biological role, catalyzes the attachment of threonine to tRNA(Thr) in a two-step reaction: L-threonine is first activated by ATP to form Thr-AMP and then transferred to the acceptor end of tRNA(Thr). Also edits incorrectly charged L-seryl-tRNA(Thr). The chain is Threonine--tRNA ligase from Prosthecochloris aestuarii (strain DSM 271 / SK 413).